A 397-amino-acid chain; its full sequence is Keratinocyte differentiation factor 1 (397 aa).

Pro residues predominate over residues 1-16 (MPRPGQPRPSSGPPRL). Disordered regions lie at residues 1 to 67 (MPRP…SAEP), 124 to 158 (EAAW…MGSS), and 191 to 214 (PLAD…RGSE). Basic and acidic residues predominate over residues 44–55 (RPDPKDPGHHGP). Polar residues predominate over residues 201-211 (SLPSTFTSSPR). The residue at position 218 (serine 218) is a Phosphoserine. Disordered stretches follow at residues 304–339 (ISTR…TMVG) and 361–392 (ARKL…GAPL). Positions 321-330 (ARSTAPAAAP) are enriched in low complexity. Polar residues predominate over residues 375-388 (SQDSSFQGTDTDSS).

It localises to the cytoplasm. The protein resides in the cell junction. Functionally, plays a role in the regulation of the epidermis formation during early development. Required both as an inhibitor of basal cell proliferation and a promoter of differentiation of basal progenitor cell progeny. The polypeptide is Keratinocyte differentiation factor 1 (Kdf1) (Rattus norvegicus (Rat)).